The following is a 276-amino-acid chain: Rhamnulose-1-phosphate aldolase (276 aa).

E117 is a catalytic residue. Zn(2+) is bound by residues H141, H143, and H212.

This sequence belongs to the aldolase class II family. RhaD subfamily. As to quaternary structure, homotetramer. Zn(2+) serves as cofactor.

It is found in the cytoplasm. It carries out the reaction L-rhamnulose 1-phosphate = (S)-lactaldehyde + dihydroxyacetone phosphate. It functions in the pathway carbohydrate degradation; L-rhamnose degradation; glycerone phosphate from L-rhamnose: step 3/3. Functionally, catalyzes the reversible cleavage of L-rhamnulose-1-phosphate to dihydroxyacetone phosphate (DHAP) and L-lactaldehyde. The polypeptide is Rhamnulose-1-phosphate aldolase (Klebsiella pneumoniae subsp. pneumoniae (strain ATCC 700721 / MGH 78578)).